A 307-amino-acid polypeptide reads, in one-letter code: UAP56-interacting factor (307 aa).

The segment covering 1–25 (MSGFGAAALLSGSSAAAGTRSGSSD) has biased composition (low complexity). 2 disordered regions span residues 1–28 (MSGF…DSLE) and 41–85 (NKKE…KNHL). Residues 26–44 (SLEKIDMSLDDIIKLNKKE) carry the UAP56-binding motif motif. The segment covering 57–78 (LQQNRTQQFRTPGSKWGIQQQK) has biased composition (polar residues).

This sequence belongs to the UIF family. In terms of tissue distribution, widely expressed.

It is found in the nucleus. The protein localises to the nucleoplasm. The protein resides in the nucleus speckle. Functionally, required for mRNA export from the nucleus to the cytoplasm. Acts as an adapter that uses the DDX39B/UAP56-NFX1 pathway to ensure efficient mRNA export and delivering to the nuclear pore. The sequence is that of UAP56-interacting factor (FYTTD1) from Gallus gallus (Chicken).